Reading from the N-terminus, the 418-residue chain is uncharacterized protein (418 aa).

Residues 282-297 show a composition bias toward basic and acidic residues; the sequence is EEHSSIAKLDSEEKIR. The tract at residues 282–346 is disordered; that stretch reads EEHSSIAKLD…SASVDDVSEE (65 aa). A compositionally biased stretch (low complexity) spans 304-316; sequence SSTSLSPDPTSDN. Polar residues predominate over residues 322 to 337; sequence WVSSQDTSKNSSNLAS.

This is an uncharacterized protein from Schizosaccharomyces pombe (strain 972 / ATCC 24843) (Fission yeast).